The chain runs to 273 residues: Undecaprenyl-diphosphatase (273 aa).

Transmembrane regions (helical) follow at residues 43–63, 82–102, 109–129, 185–205, 214–234, and 249–269; these read IGNV…CWEY, KFVL…VLLI, LFNP…ILWA, TEFS…YDVL, ADLP…FVAV, and FAWY…LGWI.

Belongs to the UppP family.

Its subcellular location is the cell inner membrane. The catalysed reaction is di-trans,octa-cis-undecaprenyl diphosphate + H2O = di-trans,octa-cis-undecaprenyl phosphate + phosphate + H(+). In terms of biological role, catalyzes the dephosphorylation of undecaprenyl diphosphate (UPP). Confers resistance to bacitracin. In Laribacter hongkongensis (strain HLHK9), this protein is Undecaprenyl-diphosphatase.